Consider the following 649-residue polypeptide: Forkhead box protein O1 (649 aa).

Disordered stretches follow at residues 1–62 and 112–151; these read MAEA…ASAS and VHSA…SSRR. At T24 the chain carries Phosphothreonine; by PKB/AKT1 or PKB/AKT2 and SGK1. The segment covering 33–62 has biased composition (low complexity); it reads NQSNSTTSSPAPSGSTAANPDATASLASAS. The segment covering 116–135 has biased composition (pro residues); that stretch reads PPQPPPTGPLSQPPPVPPAA. A DNA-binding region (fork-head) is located at residues 154–248; the sequence is WGNLSYADLI…KSGKSPRRRA (95 aa). 2 DNA-binding regions span residues 205–212 and 228–231; these read NSIRHNLS and SSWW. Position 206 is a phosphoserine; by STK4/MST1 (S206). Phosphoserine occurs at positions 212, 228, and 229. Residues 228–339 form a disordered region; sequence SSWWMLNPEG…DDLGDGDVHS (112 aa). 2 positions are modified to N6-acetyllysine: K239 and K242. Residue S243 is modified to Phosphoserine; by CDK1. Omega-N-methylarginine; by PRMT1 occurs at positions 245 and 247. The short motif at 245–247 is the Nuclear localization signal element; it reads RRR. Phosphoserine; by PKB/AKT1 and SGK1 is present on S250. N6-acetyllysine is present on residues K256, K259, and K268. Basic residues predominate over residues 258 to 269; that stretch reads AKSRGRAAKKKA. The interval 277–557 is sufficient for interaction with NLK; it reads GPGDSPGSQF…RLTPVKTPLQ (281 aa). A phosphoserine mark is found at S281 and S292. Residues 303–320 are compositionally biased toward polar residues; that stretch reads NWSTFRPRTSSNASTISG. Position 313 is a phosphoserine; by PKB/AKT1 (S313). S316 carries the phosphoserine; by CK1 and SGK1 modification. The residue at position 319 (S319) is a Phosphoserine; by CK1. A Phosphoserine modification is found at S323. T327 is subject to Phosphothreonine. The required for interaction with RUNX2 stretch occupies residues 357–453; that stretch reads SEISNPENME…GGLNQYNCAP (97 aa). The residue at position 417 (K417) is an N6-acetyllysine. Positions 456–460 match the Required for interaction with SIRT1 motif; sequence LKELL.

In terms of assembly, interacts with LRPPRC. Interacts with RUNX2; the interaction inhibits RUNX2 transcriptional activity and mediates the IGF1/insulin-dependent BGLAP expression in osteoblasts Interacts with PPP2R1A; the interaction regulates the dephosphorylation of FOXO1 at Thr-24 and Ser-250 leading to its nuclear import. Interacts with NLK. Interacts with SIRT1; the interaction results in the deacetylation of FOXO1 leading to activation of FOXO1-mediated transcription of genes involved in DNA repair and stress resistance. Binds to CDK1. Interacts with the 14-3-3 proteins, YWHAG and YWHAZ; the interactions require insulin-stimulated phosphorylation on Thr-24, promote nuclear exit and loss of transcriptional activity. Interacts with SKP2; the interaction ubiquitinates FOXO1 leading to its proteasomal degradation. The interaction requires the presence of KRIT1. Interacts (via the C-terminal half) with ATF4 (via its DNA binding domain); the interaction occurs in osteoblasts, regulates glucose homeostasis via suppression of beta-cell proliferation and subsequent decrease in insulin production. Interacts with PRMT1; the interaction methylates FOXO1, prevents PKB/AKT1 phosphorylation and retains FOXO1 in the nucleus. Interacts with EP300 and CREBBP; the interactions acetylate FOXO1. Interacts with SIRT2; the interaction is disrupted in response to oxidative stress or serum deprivation, leading to increased level of acetylated FOXO1, which promotes stress-induced autophagy by stimulating E1-like activating enzyme ATG7. Interacts (acetylated form) with ATG7; the interaction is increased in response to oxidative stress or serum deprivation and promotes the autophagic process leading to cell death. Interacts (acetylated form) with PPARG. Interacts with XBP1; this interaction is direct and leads to FOXO1 ubiquitination and degradation via the proteasome pathway. Interacts (via the Fork-head domain) with CEBPA; the interaction increases when FOXO1 is deacetylated. Interacts with WDFY2. Forms a complex with WDFY2 and AKT1. Interacts with CRY1. Interacts with PPIA/CYPA; the interaction promotes FOXO1 dephosphorylation, nuclear accumulation and transcriptional activity. Interacts with TOX4; FOXO1 is required for full induction of TOX4-dependent activity and the interaction is inhibited by insulin. Interacts (when phosphorylated on Ser-250) with STUB1/CHIP. Post-translationally, phosphorylation by NLK promotes nuclear export and inhibits the transcriptional activity. In response to growth factors, phosphorylation on Thr-24, Ser-250 and Ser-313 by PKB/AKT1 promotes nuclear export and inactivation of transactivational activity. Phosphorylation on Thr-24 is required for binding 14-3-3 proteins. Phosphorylation of Ser-250 decreases DNA-binding activity and promotes the phosphorylation of Thr-24 and Ser-313, permitting phosphorylation of Ser-316 and Ser-319, probably by CDK1, leading to nuclear exclusion and loss of function. Stress signals, such as response to oxygen or nitric oxide, attenuate the PKB/AKT1-mediated phosphorylation leading to nuclear retention. Phosphorylation of Ser-323 is independent of IGF1 and leads to reduced function. Dephosphorylated on Thr-24 and Ser-250 by PP2A in beta-cells under oxidative stress leading to nuclear retention. Phosphorylation of Ser-243 by CDK1 disrupts binding of 14-3-3 proteins leading to nuclear accumulation and has no effect on DNA binding nor transcriptional activity. Phosphorylation by STK4/MST1 on Ser-206, upon oxidative stress, inhibits binding to 14-3-3 proteins and nuclear export. PPIA/CYPA promotes its dephosphorylation on Ser-250. In terms of processing, ubiquitinated by SKP2. Ubiquitination leads to proteasomal degradation. Ubiquitinated by STUB1/CHIP; when Ser-250 is phosphorylated. Methylation inhibits AKT1-mediated phosphorylation at Ser-250 and is increased by oxidative stress. Post-translationally, acetylated. Acetylation at Lys-256 and Lys-268 are necessary for autophagic cell death induction. Deacetylated by SIRT2 in response to oxidative stress or serum deprivation, thereby negatively regulating FOXO1-mediated autophagic cell death. Once in the nucleus, acetylated by CREBBP/EP300. Acetylation diminishes the interaction with target DNA and attenuates the transcriptional activity. It increases the phosphorylation at Ser-250. Deacetylation by SIRT1 results in reactivation of the transcriptional activity. Oxidative stress by hydrogen peroxide treatment appears to promote deacetylation and uncoupling of insulin-induced phosphorylation. By contrast, resveratrol acts independently of acetylation. Acetylated at Lys-417, promoting its localization to the nucleus and transcription factor activity. Deacetylation at Lys-417 by SIRT6, promotes its translocation into the cytoplasm, preventing its transcription factor activity. Deacetylation and subsequent inhibition by SIRT6 has different effects depending on cell types: it inhibits gluconeogenesis in hepatocytes, promotes glucose sensing in pancreatic beta-cells and regulates lipid catabolism in brown adipocytes. In terms of tissue distribution, expressed in the internal elastic lamina of the carotid artery (at protein level).

Its subcellular location is the cytoplasm. The protein resides in the nucleus. Transcription factor that is the main target of insulin signaling and regulates metabolic homeostasis in response to oxidative stress. Binds to the insulin response element (IRE) with consensus sequence 5'-TT[G/A]TTTTG-3' and the related Daf-16 family binding element (DBE) with consensus sequence 5'-TT[G/A]TTTAC-3'. Activity suppressed by insulin. Main regulator of redox balance and osteoblast numbers and controls bone mass. Orchestrates the endocrine function of the skeleton in regulating glucose metabolism. Also acts as a key regulator of chondrogenic commitment of skeletal progenitor cells in response to lipid availability: when lipids levels are low, translocates to the nucleus and promotes expression of SOX9, which induces chondrogenic commitment and suppresses fatty acid oxidation. Acts synergistically with ATF4 to suppress osteocalcin/BGLAP activity, increasing glucose levels and triggering glucose intolerance and insulin insensitivity. Also suppresses the transcriptional activity of RUNX2, an upstream activator of osteocalcin/BGLAP. Acts as an inhibitor of glucose sensing in pancreatic beta cells by acting as a transcription repressor and suppressing expression of PDX1. In hepatocytes, promotes gluconeogenesis by acting together with PPARGC1A and CEBPA to activate the expression of genes such as IGFBP1, G6PC1 and PCK1. Also promotes gluconeogenesis by directly promoting expression of PPARGC1A and G6PC1. Important regulator of cell death acting downstream of CDK1, PKB/AKT1 and STK4/MST1. Promotes neural cell death. Mediates insulin action on adipose tissue. Regulates the expression of adipogenic genes such as PPARG during preadipocyte differentiation and, adipocyte size and adipose tissue-specific gene expression in response to excessive calorie intake. Regulates the transcriptional activity of GADD45A and repair of nitric oxide-damaged DNA in beta-cells. Required for the autophagic cell death induction in response to starvation or oxidative stress in a transcription-independent manner. Mediates the function of MLIP in cardiomyocytes hypertrophy and cardiac remodeling. Positive regulator of apoptosis in cardiac smooth muscle cells as a result of its transcriptional activation of pro-apoptotic genes. Regulates endothelial cell (EC) viability and apoptosis in a PPIA/CYPA-dependent manner via transcription of CCL2 and BCL2L11 which are involved in EC chemotaxis and apoptosis. The chain is Forkhead box protein O1 (Foxo1) from Rattus norvegicus (Rat).